The primary structure comprises 479 residues: Protein ORD (479 aa).

The segment at 102–140 is disordered; it reads KEEETEPESESDLDEGPSTSKQALERMVQRAERKAKEAS. The segment covering 104–116 has biased composition (acidic residues); that stretch reads EETEPESESDLDE. Over residues 124-140 the composition is skewed to basic and acidic residues; the sequence is ALERMVQRAERKAKEAS.

As to quaternary structure, interacts with Sce.

It is found in the nucleus. It localises to the chromosome. The protein localises to the centromere. Its function is as follows. Essential for proper maintenance of sister-chromatid cohesion in both male and female meiosis. Mutations in ord cause premature separation of the sister chromatids in meiosis I and random segregation in both meiotic divisions. Required for chiasma maintenance in female meiosis. Mutations in ord reduce recombination in female meiosis. This is Protein ORD (ord) from Drosophila melanogaster (Fruit fly).